A 228-amino-acid chain; its full sequence is Putative NAC domain-containing protein 61 (228 aa).

Positions 5–156 (LSVGFRFYPT…KSGSSRAFDR (152 aa)) constitute an NAC domain. Disordered regions lie at residues 77–96 (ARGGRPSRTTGSGYWKATGS) and 166–197 (RNLPSNGVETSSRATISTSPETSHSGGNQVDL). The segment covering 80 to 89 (GRPSRTTGSG) has biased composition (low complexity). Residues 168–193 (LPSNGVETSSRATISTSPETSHSGGN) show a composition bias toward polar residues.

It is found in the nucleus. This chain is Putative NAC domain-containing protein 61 (NAC061), found in Arabidopsis thaliana (Mouse-ear cress).